The primary structure comprises 175 residues: Sec-independent protein translocase protein TatB (175 aa).

Residues 1–21 (MFDIGWSELVLIGVVALIAIG) form a helical membrane-spanning segment. 2 disordered regions span residues 100–132 (KPAE…PTPE) and 155–175 (QAPV…AKAS). A compositionally biased stretch (low complexity) spans 111-132 (EAPATSSEALTTPTTPEAPTPE).

It belongs to the TatB family. In terms of assembly, the Tat system comprises two distinct complexes: a TatABC complex, containing multiple copies of TatA, TatB and TatC subunits, and a separate TatA complex, containing only TatA subunits. Substrates initially bind to the TatABC complex, which probably triggers association of the separate TatA complex to form the active translocon.

The protein localises to the cell inner membrane. In terms of biological role, part of the twin-arginine translocation (Tat) system that transports large folded proteins containing a characteristic twin-arginine motif in their signal peptide across membranes. Together with TatC, TatB is part of a receptor directly interacting with Tat signal peptides. TatB may form an oligomeric binding site that transiently accommodates folded Tat precursor proteins before their translocation. In Bradyrhizobium diazoefficiens (strain JCM 10833 / BCRC 13528 / IAM 13628 / NBRC 14792 / USDA 110), this protein is Sec-independent protein translocase protein TatB.